A 142-amino-acid polypeptide reads, in one-letter code: Large-conductance mechanosensitive channel (142 aa).

The next 2 membrane-spanning stretches (helical) occupy residues 10-30 (FAIKGNVIDLAVGVIIGAAFS) and 86-106 (GNFITVAVNFAILAFIIFLMV).

The protein belongs to the MscL family. Homopentamer.

It is found in the cell inner membrane. In terms of biological role, channel that opens in response to stretch forces in the membrane lipid bilayer. May participate in the regulation of osmotic pressure changes within the cell. This is Large-conductance mechanosensitive channel from Polaromonas naphthalenivorans (strain CJ2).